Here is a 1117-residue protein sequence, read N- to C-terminus: Protein cup (1117 aa).

Positions 1 to 106 (MQMAEAEQEN…PPPPPPLPTS (106 aa)) are disordered. Composition is skewed to pro residues over residues 54–64 (YPPPPPPPTPV) and 95–104 (CAPPPPPPLP). Phosphoserine is present on residues S263 and S270. The interval 270–326 (SPRKQVASKEAVPEQQSSQVQQKRPPSTGIHKPGSLRAPKAVRPTTAPVVSSKPVKS) is disordered. Over residues 283–294 (EQQSSQVQQKRP) the composition is skewed to polar residues. The YXXXXLphi motif 1 motif lies at 327 to 333 (YTRSRLM). Phosphoserine is present on residues S347 and S350. The YXXXXLphi motif 2 signature appears at 363–369 (ELEGRLR). 6 disordered regions span residues 493–528 (ISSQ…EDLS), 596–618 (KEGN…KMDH), 654–673 (TEHQ…SFQF), 679–728 (SQQN…SSSS), 984–1004 (GAKH…QARP), and 1016–1051 (ISGG…FQSF). Phosphothreonine is present on T503. Phosphoserine is present on residues S509, S513, S520, S523, and S524. Low complexity-rich tracts occupy residues 679–712 (SQQN…NTNN) and 988–1001 (QAQQ…QQRQ).

It belongs to the 4E-T/EIF4E-T family. Component of the osk RNP complex, which is composed of at least exu, yps, aret/bruno, cup, and the mRNA of osk. Interacts with the decapping activators me31B and tral. Component of the nanos RNP complex, which is composed of at least smg, cup, tral, me31B, the CCR4-NOT complex members Rga/NOT2 and Caf1, and the mRNA of nanos (nos). Interacts with btz. Recruited to the 3'-UTR of nos and osk mRNAs by smg and btz, respectively. Forms a ribonucleoprotein complex (RNP) containing at least me31B, eIF4E1, cup, tral and pAbp; this interaction is required for the translational silencing of maternal mRNAs during the maternal-to-zygotic transition. No interaction was detected with pAbp in 1-5 hour embryos. Interacts with osk and vas. Interacts with Pop2, twin/CCR4, Rga, Not3 and Not1 which are all core components of the CCR4-NOT deadenylase complex; interaction with the complex is required for cup deadenylation activity. Interacts with nanos. Interacts with smg. Interacts (via YXXXXLphi motifs) with eIF4E1; the interaction promotes retention of cup in the cytoplasm. Interacts with orb; the interaction represses the orb positive autoregulatory loop. Interacts with Nup154. As to expression, predominantly expressed in ovaries and in 0-2 hours old embryos. Weakly expressed in testis. Expressed in young embryos through stage 9, then it decreases throughout the rest of embryogenesis. In ovaries, it is expressed in germ cells throughout pre-vitellogenic development, but is not expressed in the somatic follicle cells. In germarial cysts, the protein (and not the transcripts) is transported selectively into the oocyte.

It localises to the cytoplasm. The protein resides in the nucleus. Its subcellular location is the cytoplasmic ribonucleoprotein granule. Adapter protein that plays a central role in localization of transcripts in the oocyte and in young embryos. Maintains RNA targets in a repressed state by promoting their deadenylation and protects deadenylated mRNAs from further degradation. Binds to and recruits eIF-4E to the 3'-UTR of some mRNA targets which prevents interaction between eIF4E1 and eIF4G. This may contribute to translational repression but does not appear to be necessary for it to occur. Can promote translational repression independently of deadenylation and eIF4E1 binding. Required for correct localization of eIF4E1 in the developing oocyte. Required for translational repression of oskar (osk) mRNA. Also required for the translational repression of nanos (nos) mRNA. Promotes the accumulation of the germ plasm components osk, vas and stau at the posterior pole of the oocyte and is required for germ cell development. Represses orb positive autoregulatory activity which prevents premature activation of orb and ensures its accumulation specifically in the developing oocyte. In 0-1 hour embryos, forms a complex with me31B, cup, tral and pAbp which binds to various mRNAs including maternal mRNAs, and down-regulates their expression during the maternal-to-zygotic transition. The sequence is that of Protein cup (cup) from Drosophila melanogaster (Fruit fly).